The following is a 78-amino-acid chain: Large ribosomal subunit protein uL24 (78 aa).

This sequence belongs to the universal ribosomal protein uL24 family. As to quaternary structure, part of the 50S ribosomal subunit.

In terms of biological role, one of two assembly initiator proteins, it binds directly to the 5'-end of the 23S rRNA, where it nucleates assembly of the 50S subunit. Its function is as follows. One of the proteins that surrounds the polypeptide exit tunnel on the outside of the subunit. This chain is Large ribosomal subunit protein uL24, found in Campylobacter curvus (strain 525.92).